A 626-amino-acid chain; its full sequence is Chaperone protein HtpG (626 aa).

The tract at residues 1–338 is a; substrate-binding; the sequence is MTANKNQKKT…SNDLPLNVSR (338 aa). Residues 339–553 are b; the sequence is EILQDHKLVY…SNEMSTQMAK (215 aa). Residues 554–626 form a c region; the sequence is LFSAAGQTVP…ARINDLLINN (73 aa).

Belongs to the heat shock protein 90 family. Homodimer.

The protein resides in the cytoplasm. Molecular chaperone. Has ATPase activity. The polypeptide is Chaperone protein HtpG (Buchnera aphidicola subsp. Baizongia pistaciae (strain Bp)).